Consider the following 247-residue polypeptide: MADS-box transcription factor 1 (247 aa).

In terms of domain architecture, MADS-box spans 1-61; sequence MGRGRVELKR…GKLYEFCSTS (61 aa). The K-box domain maps to 91–181; the sequence is ELSSQQEYLK…RQRMEGYQIN (91 aa).

As to expression, expressed abundantly in the seed coat and to lesser extent in young buds, carpels, petals, and stamen.

The protein localises to the nucleus. Probable transcription factor. The chain is MADS-box transcription factor 1 from Pisum sativum (Garden pea).